The primary structure comprises 272 residues: Orotidine 5'-phosphate decarboxylase (272 aa).

Lys95 acts as the Proton donor in catalysis.

It belongs to the OMP decarboxylase family. Type 2 subfamily.

The catalysed reaction is orotidine 5'-phosphate + H(+) = UMP + CO2. Its pathway is pyrimidine metabolism; UMP biosynthesis via de novo pathway; UMP from orotate: step 2/2. This chain is Orotidine 5'-phosphate decarboxylase, found in Cupriavidus taiwanensis (strain DSM 17343 / BCRC 17206 / CCUG 44338 / CIP 107171 / LMG 19424 / R1) (Ralstonia taiwanensis (strain LMG 19424)).